We begin with the raw amino-acid sequence, 577 residues long: Proline--tRNA ligase (577 aa).

It belongs to the class-II aminoacyl-tRNA synthetase family. ProS type 1 subfamily. As to quaternary structure, homodimer.

The protein resides in the cytoplasm. It catalyses the reaction tRNA(Pro) + L-proline + ATP = L-prolyl-tRNA(Pro) + AMP + diphosphate. Its function is as follows. Catalyzes the attachment of proline to tRNA(Pro) in a two-step reaction: proline is first activated by ATP to form Pro-AMP and then transferred to the acceptor end of tRNA(Pro). As ProRS can inadvertently accommodate and process non-cognate amino acids such as alanine and cysteine, to avoid such errors it has two additional distinct editing activities against alanine. One activity is designated as 'pretransfer' editing and involves the tRNA(Pro)-independent hydrolysis of activated Ala-AMP. The other activity is designated 'posttransfer' editing and involves deacylation of mischarged Ala-tRNA(Pro). The misacylated Cys-tRNA(Pro) is not edited by ProRS. The chain is Proline--tRNA ligase from Chlamydia felis (strain Fe/C-56) (Chlamydophila felis).